A 305-amino-acid polypeptide reads, in one-letter code: MAAILPTFSIKSSSCTYSSSKRSLSSPKAVSLSSSVNGTPKVQSLRLSTSFVCSPNQIIKLKSVSPSRSTQLRRAVGGLEIKMMSVDAGIGVMGTKLGMMSFFEEDGTVVPVTVIGFKEGNIVTQVKTESTDGYNAVQVGYERLRDRKLTMPERGHLNKAGVIPMRHLQEFRLVSVDDFTPSQKLLFEELFKEGDMVDISGTTIGKGFQGGIKRHNFKRGLMTHGSKSHRALGSIGAGTTPGHVYKGKKMPGRMGGTKTKIRKLKIMKIDTDLRVVMIKGAVPGKPGNLLRLAPAKIVGKNIPKN.

Residues 1 to 84 (MAAILPTFSI…AVGGLEIKMM (84 aa)) constitute a chloroplast transit peptide. A disordered region spans residues 228-256 (SHRALGSIGAGTTPGHVYKGKKMPGRMGG).

In terms of assembly, component of the chloroplast large ribosomal subunit (LSU). Mature 70S chloroplast ribosomes of higher plants consist of a small (30S) and a large (50S) subunit. The 30S small subunit contains 1 molecule of ribosomal RNA (16S rRNA) and 24 different proteins. The 50S large subunit contains 3 rRNA molecules (23S, 5S and 4.5S rRNA) and 33 different proteins.

The protein localises to the plastid. It localises to the chloroplast. Its function is as follows. Component of the chloroplast ribosome (chloro-ribosome), a dedicated translation machinery responsible for the synthesis of chloroplast genome-encoded proteins, including proteins of the transcription and translation machinery and components of the photosynthetic apparatus. This Spinacia oleracea (Spinach) protein is Large ribosomal subunit protein uL3c (RPL3).